A 391-amino-acid polypeptide reads, in one-letter code: Na(+)/H(+) antiporter NhaA (391 aa).

11 helical membrane passes run 14–34 (GGIILIIAAAAAMVFANLGAT), 59–79 (MLLWINDALMAVFFLLVGLEV), 95–115 (AFPVIAAIGGMVVPALLYLAF), 125–145 (GWAIPAATDIAFALGVLALLG), 154–174 (IFLMALAIIDDLGAIVIIALF), 180–200 (SILSLSVAAGAIAALALLNIF), 219–239 (VLKSGVHATLAGVIIGFFIPL), 254–274 (VLHPWVAFMILPLFAFANAGV), 292–312 (IIAGLFIGKPLGISLFCWLAL), 328–348 (IMAVGVLCGIGFTMSIFISTL), and 357–377 (LIVWAKLGILTGSLLAAFVGY).

It belongs to the NhaA Na(+)/H(+) (TC 2.A.33) antiporter family.

It is found in the cell inner membrane. The enzyme catalyses Na(+)(in) + 2 H(+)(out) = Na(+)(out) + 2 H(+)(in). Its function is as follows. Na(+)/H(+) antiporter that extrudes sodium in exchange for external protons. This is Na(+)/H(+) antiporter NhaA from Enterobacter sp. (strain 638).